Consider the following 206-residue polypeptide: Ras-related protein RABH1a (206 aa).

14-21 (GDQGVGKT) lines the GTP pocket. The Effector region signature appears at 36-44 (YQATIGIDF). GTP-binding positions include 62–66 (DTAGQ), 120–123 (NKTD), and 150–151 (SA). Residues Cys-204 and Cys-206 are each lipidated (S-geranylgeranyl cysteine). Cys-206 carries the post-translational modification Cysteine methyl ester.

It belongs to the small GTPase superfamily. Rab family.

It localises to the golgi apparatus membrane. Its function is as follows. Protein transport. Regulator of membrane traffic from the Golgi apparatus towards the endoplasmic reticulum (ER). This chain is Ras-related protein RABH1a (RABH1A), found in Arabidopsis thaliana (Mouse-ear cress).